The primary structure comprises 433 residues: Leucine-rich repeat extensin-like protein 7 (433 aa).

The signal sequence occupies residues 1–21; the sequence is MRIYQPTLLIFTTVVLLSISA. N-linked (GlcNAc...) asparagine glycosylation is present at asparagine 71. LRR repeat units follow at residues 98 to 122, 123 to 145, 146 to 170, 171 to 194, 196 to 217, 219 to 239, 241 to 265, 266 to 289, and 290 to 313; these read VKTV…LGLL, TDIA…GFSQ, LSLL…VIGL, PKLK…LFDK, LDAL…MGNS, VSVL…SFGK, GKTL…MGLL, QNVT…MGQM, and ENLE…LCSL. An N-linked (GlcNAc...) asparagine glycan is attached at asparagine 267. Residue asparagine 340 is glycosylated (N-linked (GlcNAc...) asparagine). The interval 380 to 433 is disordered; the sequence is FSPPPSQISPSSQPLAPAPSPTSPPLSTPPPARPCPPVYSPPPPPPLSLAPSMN. The contains the Ser-Pro(4) repeats stretch occupies residues 381–433; sequence SPPPSQISPSSQPLAPAPSPTSPPLSTPPPARPCPPVYSPPPPPPLSLAPSMN. Positions 395–427 are enriched in pro residues; it reads APAPSPTSPPLSTPPPARPCPPVYSPPPPPPLS.

In terms of processing, hydroxylated on proline residues in the S-P-P-P-P repeat. O-glycosylated on hydroxyprolines. Expressed in flowers and pollen.

The protein localises to the secreted. The protein resides in the cell wall. In terms of biological role, modulates cell morphogenesis by regulating cell wall formation and assembly, and/or growth polarization. This is Leucine-rich repeat extensin-like protein 7 (LRX7) from Arabidopsis thaliana (Mouse-ear cress).